The primary structure comprises 1303 residues: Ninein-like protein (1303 aa).

EF-hand domains lie at 8–43 (RYVAQLKDEFDSCDTTGTGYLDKEELTALCHKLSLD) and 61–77 (RVNFEEFKEGFVAVLSR). Residues 107–135 (TKRYGRRSRPDKTDLELTADSDSLPFGTD) form a disordered region. 2 consecutive EF-hand domains span residues 203–238 (VTDGQVRAVWEELGVGAAGSLNREELSLVCDHIGLK) and 240–275 (LEAEELDALFRKLDKDQDGKVSLIEFQSGLFKPHDH). Residues D253, D255, D257, K259, and E264 each contribute to the Ca(2+) site. Positions 464–590 (EYESEVLLEQ…CSELELLKSQ (127 aa)) form a coiled coil. The span at 592 to 617 (SGKRTRLSRSSLPANDWSNRRALTTE) shows a compositional bias: polar residues. Residues 592 to 634 (SGKRTRLSRSSLPANDWSNRRALTTESDSDDPEMKKGTSPQVR) are disordered. Coiled-coil stretches lie at residues 660–791 (ELAM…LEAE), 821–876 (LAVL…LSAR), and 919–1146 (SKQL…VQAQ). The disordered stretch occupies residues 1156-1181 (EQMGSGTQEHASHLQTQLAEQQRRTQ). Residues 1159-1175 (GSGTQEHASHLQTQLAE) are compositionally biased toward polar residues. Residues 1202 to 1278 (QEQYEKLMAS…EQRQKSAEKK (77 aa)) are a coiled coil.

Its subcellular location is the cytoplasm. It localises to the cytoskeleton. It is found in the microtubule organizing center. The protein resides in the centrosome. Required for the intracellular transport of organelles and vesicles, and is essential for the photoreceptor's outer segments formation, maintenance and function. The polypeptide is Ninein-like protein (Ninl) (Danio rerio (Zebrafish)).